We begin with the raw amino-acid sequence, 153 residues long: uncharacterized protein (153 aa).

The disordered stretch occupies residues 19 to 46 (EKSTRLEEDAMESEPLAGTKTRGRGRRR).

This is an uncharacterized protein from Homo sapiens (Human).